Here is a 595-residue protein sequence, read N- to C-terminus: Thiol:disulfide interchange protein DsbD (595 aa).

The first 24 residues, 1 to 24 (MAQRFITLILLLCSVLLAPHSAQS), serve as a signal peptide directing secretion. A disulfide bridge links C134 with C140. The segment at 166–186 (NSSATVNPPATTQPEGDATPV) is disordered. 9 consecutive transmembrane segments (helical) span residues 197–217 (ALLIGIGIAFTPCVLPMYPLI), 233–253 (ILILAVVYVQGMALTYTLLGL), 270–290 (YVLIGLSVLFVLLALSMFGLY), 311–331 (GGSLAGVFAMGALAGLICSPC), 332–352 (TTAPLSAILLYIAQSGNMLAG), 353–373 (GGTLYLYALGMGIPLVVVTLF), 384–404 (WMQYVKEAFGFVILALPVFLL), 411–431 (VWGLRLWSLLAVAFFGWAFVL), and 435–455 (AHAGWVRVCQLLLLAALLIVA). Residues C209 and C331 are joined by a disulfide bond. Positions 452 to 592 (LIVARPLQDW…FLQHLQNTPA (141 aa)) constitute a Thioredoxin domain. A disulfide bond links C507 and C510.

Belongs to the thioredoxin family. DsbD subfamily.

It localises to the cell inner membrane. The catalysed reaction is [protein]-dithiol + NAD(+) = [protein]-disulfide + NADH + H(+). It catalyses the reaction [protein]-dithiol + NADP(+) = [protein]-disulfide + NADPH + H(+). Required to facilitate the formation of correct disulfide bonds in some periplasmic proteins and for the assembly of the periplasmic c-type cytochromes. Acts by transferring electrons from cytoplasmic thioredoxin to the periplasm. This transfer involves a cascade of disulfide bond formation and reduction steps. This Yersinia pestis bv. Antiqua (strain Nepal516) protein is Thiol:disulfide interchange protein DsbD.